A 494-amino-acid polypeptide reads, in one-letter code: Protein nucleotidyltransferase YdiU (494 aa).

Gly99, Gly101, Arg102, Lys118, Asp130, Gly131, Arg181, and Arg188 together coordinate ATP. The active-site Proton acceptor is Asp261. The Mg(2+) site is built by Asn262 and Asp271. Asp271 contacts ATP.

Belongs to the SELO family. The cofactor is Mg(2+). Mn(2+) serves as cofactor.

It catalyses the reaction L-seryl-[protein] + ATP = 3-O-(5'-adenylyl)-L-seryl-[protein] + diphosphate. The catalysed reaction is L-threonyl-[protein] + ATP = 3-O-(5'-adenylyl)-L-threonyl-[protein] + diphosphate. The enzyme catalyses L-tyrosyl-[protein] + ATP = O-(5'-adenylyl)-L-tyrosyl-[protein] + diphosphate. It carries out the reaction L-histidyl-[protein] + UTP = N(tele)-(5'-uridylyl)-L-histidyl-[protein] + diphosphate. It catalyses the reaction L-seryl-[protein] + UTP = O-(5'-uridylyl)-L-seryl-[protein] + diphosphate. The catalysed reaction is L-tyrosyl-[protein] + UTP = O-(5'-uridylyl)-L-tyrosyl-[protein] + diphosphate. Nucleotidyltransferase involved in the post-translational modification of proteins. It can catalyze the addition of adenosine monophosphate (AMP) or uridine monophosphate (UMP) to a protein, resulting in modifications known as AMPylation and UMPylation. This is Protein nucleotidyltransferase YdiU from Variovorax paradoxus (strain S110).